Here is a 157-residue protein sequence, read N- to C-terminus: 2-C-methyl-D-erythritol 2,4-cyclodiphosphate synthase (157 aa).

Asp8 and His10 together coordinate a divalent metal cation. 4-CDP-2-C-methyl-D-erythritol 2-phosphate-binding positions include 8 to 10 and 34 to 35; these read DVH and HS. His42 is an a divalent metal cation binding site. 4-CDP-2-C-methyl-D-erythritol 2-phosphate-binding positions include 56 to 58, 61 to 65, 132 to 135, Phe139, and Arg142; these read DIG, FPDNE, and TTTE.

This sequence belongs to the IspF family. As to quaternary structure, homotrimer. It depends on a divalent metal cation as a cofactor.

The catalysed reaction is 4-CDP-2-C-methyl-D-erythritol 2-phosphate = 2-C-methyl-D-erythritol 2,4-cyclic diphosphate + CMP. Its pathway is isoprenoid biosynthesis; isopentenyl diphosphate biosynthesis via DXP pathway; isopentenyl diphosphate from 1-deoxy-D-xylulose 5-phosphate: step 4/6. In terms of biological role, involved in the biosynthesis of isopentenyl diphosphate (IPP) and dimethylallyl diphosphate (DMAPP), two major building blocks of isoprenoid compounds. Catalyzes the conversion of 4-diphosphocytidyl-2-C-methyl-D-erythritol 2-phosphate (CDP-ME2P) to 2-C-methyl-D-erythritol 2,4-cyclodiphosphate (ME-CPP) with a corresponding release of cytidine 5-monophosphate (CMP). This is 2-C-methyl-D-erythritol 2,4-cyclodiphosphate synthase from Desulforamulus reducens (strain ATCC BAA-1160 / DSM 100696 / MI-1) (Desulfotomaculum reducens).